A 356-amino-acid polypeptide reads, in one-letter code: Photosystem II protein D1 4 (356 aa).

3 helical membrane passes run 32 to 49 (YIGWFGVLSIPTLLAATT), 121 to 136 (HFLIGIWCLLGRFWEL), and 145 to 159 (WIAVAYSAPVIAATS). Position 121 (His-121) interacts with chlorophyll a. Residues Asp-173 and Asp-192 each coordinate [CaMn4O5] cluster. Residues 200 to 221 (FHMLGVAGVFGGALLSSLHGSL) traverse the membrane as a helical segment. His-201 lines the chlorophyll a pocket. Residue His-218 coordinates a quinone. Fe cation contacts are provided by His-218 and His-276. Residues 278–292 (LLAALPTIGIWFAAM) traverse the membrane as a helical segment. Position 336 (His-336) interacts with [CaMn4O5] cluster.

It belongs to the reaction center PufL/M/PsbA/D family. As to quaternary structure, PSII is composed of 1 copy each of membrane proteins PsbA, PsbB, PsbC, PsbD, PsbE, PsbF, PsbH, PsbI, PsbJ, PsbK, PsbL, PsbM, PsbT, PsbX, PsbY, PsbZ, Psb30/Ycf12, peripheral proteins PsbO, CyanoQ (PsbQ), PsbU, PsbV and a large number of cofactors. It forms dimeric complexes. It depends on The D1/D2 heterodimer binds P680, chlorophylls that are the primary electron donor of PSII, and subsequent electron acceptors. It shares a non-heme iron and each subunit binds pheophytin, quinone, additional chlorophylls, carotenoids and lipids. D1 provides most of the ligands for the Mn4-Ca-O5 cluster of the oxygen-evolving complex (OEC). There is also a Cl(-1) ion associated with D1 and D2, which is required for oxygen evolution. The PSII complex binds additional chlorophylls, carotenoids and specific lipids. as a cofactor. Post-translationally, tyr-164 forms a radical intermediate that is referred to as redox-active TyrZ, YZ or Y-Z.

It is found in the cellular thylakoid membrane. It catalyses the reaction 2 a plastoquinone + 4 hnu + 2 H2O = 2 a plastoquinol + O2. Functionally, photosystem II (PSII) is a light-driven water:plastoquinone oxidoreductase that uses light energy to abstract electrons from H(2)O, generating O(2) and a proton gradient subsequently used for ATP formation. It consists of a core antenna complex that captures photons, and an electron transfer chain that converts photonic excitation into a charge separation. The D1/D2 (PsbA/PsbD) reaction center heterodimer binds P680, the primary electron donor of PSII as well as several subsequent electron acceptors. The polypeptide is Photosystem II protein D1 4 (Trichormus variabilis (strain ATCC 29413 / PCC 7937) (Anabaena variabilis)).